Reading from the N-terminus, the 114-residue chain is UPF0342 protein LVIS_1488 (114 aa).

The protein belongs to the UPF0342 family.

The sequence is that of UPF0342 protein LVIS_1488 from Levilactobacillus brevis (strain ATCC 367 / BCRC 12310 / CIP 105137 / JCM 1170 / LMG 11437 / NCIMB 947 / NCTC 947) (Lactobacillus brevis).